A 185-amino-acid polypeptide reads, in one-letter code: Protein C2-DOMAIN ABA-RELATED 9 (185 aa).

The 104-residue stretch at 1 to 104 folds into the C2 domain; the sequence is MEDKPLGILR…LEAHQMELDF (104 aa). Ca(2+)-binding residues include R22, D23, D28, D74, K75, D76, and D82.

The protein belongs to the plant CAR protein family. As to quaternary structure, binds to PYR/PYL/RCAR abscisic acid intracellular receptors in an ABA-independent manner, both at the plasma membrane and in the nucleus. Interacts with LOT1 in the nuleus; this interaction is repressed by abscisic acid (ABA) and is sensitive to calcium ion Ca(2+), leading to free CAR9 accumulation at the plasma membrane. It depends on Ca(2+) as a cofactor.

The protein localises to the cell membrane. The protein resides in the nucleus. Its function is as follows. Stimulates the GTPase/ATPase activities of Obg-like ATPases. Mediates the transient calcium-dependent interaction of PYR/PYL/RCAR abscisic acid (ABA) receptors with the plasma membrane and thus regulates ABA sensitivity. This is Protein C2-DOMAIN ABA-RELATED 9 from Arabidopsis thaliana (Mouse-ear cress).